The primary structure comprises 211 residues: Uridine kinase (211 aa).

15–22 (GGSGSGKT) serves as a coordination point for ATP.

It belongs to the uridine kinase family.

The protein localises to the cytoplasm. The catalysed reaction is uridine + ATP = UMP + ADP + H(+). It carries out the reaction cytidine + ATP = CMP + ADP + H(+). It functions in the pathway pyrimidine metabolism; CTP biosynthesis via salvage pathway; CTP from cytidine: step 1/3. It participates in pyrimidine metabolism; UMP biosynthesis via salvage pathway; UMP from uridine: step 1/1. This is Uridine kinase from Latilactobacillus sakei subsp. sakei (strain 23K) (Lactobacillus sakei subsp. sakei).